Reading from the N-terminus, the 565-residue chain is FACT complex subunit ctc-1 (565 aa).

Disordered stretches follow at residues 151–173 (GNDGGKSNGHSGTGGKGKKASAG) and 477–565 (LGDD…KKTA). Residues 152–165 (NDGGKSNGHSGTGG) show a composition bias toward gly residues. Acidic residues-rich tracts occupy residues 478 to 489 (GDDDMASSDEEA), 500 to 522 (DEDEESVDEDFQAESESDVAEEY), and 532 to 553 (GSEESDVDNRVDDEDEDMDDDE).

It belongs to the SSRP1 family. In terms of assembly, forms a stable heterodimer with ctc-2/spt16. The dimer of ctc-1 and ctc-2 weakly associates with multiple molecules of nhp-1/nhp6 to form the FACT complex.

Its subcellular location is the nucleus. It localises to the chromosome. In terms of biological role, component of the FACT complex, a general chromatin factor that acts to reorganize nucleosomes. The FACT complex is involved in multiple processes that require DNA as a template such as mRNA elongation, DNA replication and DNA repair. During transcription elongation the FACT complex acts as a histone chaperone that both destabilizes and restores nucleosomal structure. It facilitates the passage of RNA polymerase II and transcription by promoting the dissociation of one histone H2A-H2B dimer from the nucleosome, then subsequently promotes the reestablishment of the nucleosome following the passage of RNA polymerase II. In Neurospora crassa (strain ATCC 24698 / 74-OR23-1A / CBS 708.71 / DSM 1257 / FGSC 987), this protein is FACT complex subunit ctc-1 (ctc-1).